We begin with the raw amino-acid sequence, 461 residues long: Tumor necrosis factor receptor superfamily member 1A (461 aa).

Positions 1-29 are cleaved as a signal peptide; the sequence is MGLSTVPGLLLPLVLRALLVDVYPAGVHG. Over 30 to 210 the chain is Extracellular; it reads LVLHPGDREK…RNDFQDTGTT (181 aa). TNFR-Cys repeat units lie at residues 43–82, 83–125, 126–166, and 167–195; these read LCPQ…TDCR, ECDN…DTVC, GCRK…DTIC, and NCHS…NLCP. Cystine bridges form between Cys-44/Cys-58, Cys-59/Cys-72, Cys-62/Cys-81, Cys-84/Cys-99, Cys-102/Cys-117, Cys-105/Cys-125, and Cys-127/Cys-143. Residue Asn-54 is glycosylated (N-linked (GlcNAc...) asparagine). An N-linked (GlcNAc...) asparagine glycan is attached at Asn-86. N-linked (GlcNAc...) asparagine glycosylation is found at Asn-145 and Asn-151. Intrachain disulfides connect Cys-146–Cys-158, Cys-149–Cys-166, Cys-168–Cys-179, Cys-182–Cys-194, and Cys-185–Cys-190. Residues 211 to 233 form a helical membrane-spanning segment; that stretch reads VLLPLVIFFGLCLAFFLFVGLAC. Residues 234 to 461 lie on the Cytoplasmic side of the membrane; the sequence is RYQRWKPKLY…RLAPAPHLLR (228 aa). The interval 340–350 is N-SMase activation domain (NSD); the sequence is LPKWGGSAHSA. Residues 362–447 form the Death domain; that stretch reads PATLYAVVDG…GCLEDIEEAL (86 aa).

Binding of TNF to the extracellular domain leads to homotrimerization. The aggregated death domains provide a novel molecular interface that interacts specifically with the death domain of TRADD. Various TRADD-interacting proteins such as TRAFS, RIPK1 and possibly FADD, are recruited to the complex by their association with TRADD. This complex activates at least two distinct signaling cascades, apoptosis and NF-kappa-B signaling. Interacts with BAG4, BABAM2, FEM1B, GRB2, SQSTM1 and TRPC4AP. Interacts with DAB2IP. Interacts directly with NOL3 (via CARD domain); inhibits TNF-signaling pathway. Interacts with SH3RF2, TRADD and RIPK1. SH3RF2 facilitates the recruitment of RIPK1 and TRADD to TNFRSF1A in a TNF-alpha-dependent process. Interacts with PGLYRP1; this interaction is important for cell death induction. Interacts (via death domain) with MADD (via death domain).

It localises to the cell membrane. It is found in the golgi apparatus membrane. Its function is as follows. Receptor for TNFSF2/TNF-alpha and homotrimeric TNFSF1/lymphotoxin-alpha. The adapter molecule FADD recruits caspase-8 to the activated receptor. The resulting death-inducing signaling complex (DISC) performs caspase-8 proteolytic activation which initiates the subsequent cascade of caspases (aspartate-specific cysteine proteases) mediating apoptosis. The protein is Tumor necrosis factor receptor superfamily member 1A (TNFRSF1A) of Sus scrofa (Pig).